Here is a 1493-residue protein sequence, read N- to C-terminus: Protein Shroom4 (1493 aa).

A PDZ domain is found at 10 to 92 (YVPVQLQGGA…ILKLIVRRRN (83 aa)). A disordered region spans residues 202–282 (CALSLRPEEP…PPQPPVRRDS (81 aa)). Polar residues-rich tracts occupy residues 234–243 (AETSGGSRRT) and 249–262 (TPSS…QEGY). Ser-411 is subject to Phosphoserine. The interval 430–695 (GSKGMELPPV…SPGQRPGQSS (266 aa)) is disordered. Composition is skewed to basic and acidic residues over residues 470 to 484 (QSSK…DDRS) and 498 to 509 (GEADGHPSEKGF). Positions 513 to 547 (NRTSRAASELANQQPSASGSLVQQATDCSSTTKAA) are enriched in polar residues. Ser-729 is subject to Phosphoserine. Disordered regions lie at residues 740–759 (AAME…ASTA) and 781–813 (SKSL…NFQP). Polar residues predominate over residues 782 to 802 (KSLSTSHLPGLTTHSNKTFTQ). At Ser-1019 the chain carries Phosphoserine. 4 disordered regions span residues 1117–1170 (AAQQ…ETSG), 1187–1206 (SFGH…AEQE), 1214–1236 (DFLP…PCYY), and 1246–1265 (GQEA…PPSG). Positions 1118-1129 (AQQQKQQQQQQK) are enriched in low complexity. Positions 1132–1159 (EEEEEEEEEEEEEEEEEEEEAEEEEEEL) are enriched in acidic residues. Residues 1213–1492 (SDFLPPIRGH…RESLLLGPSN (280 aa)) form the ASD2 domain. The stretch at 1382–1488 (LSGRLARVEN…LKCLRESLLL (107 aa)) forms a coiled coil.

The protein belongs to the shroom family. In terms of assembly, interacts directly with F-actin. As to expression, expressed in all fetal and adult tissues investigated. Expressed in adult heart, brain, placenta, lung, liver, skeletal muscle, kidney and pancreas. In brain regions detected in cerebellum, cerebral cortex, medulla, spinal cord, occipital pole, frontal lobe, temporal lobe and putamen. The expression is strongest in the medulla and weakest in the cerebral cortex.

The protein localises to the cytoplasm. It localises to the cytoskeleton. Its function is as follows. Probable regulator of cytoskeletal architecture that plays an important role in development. May regulate cellular and cytoskeletal architecture by modulating the spatial distribution of myosin II. This is Protein Shroom4 (SHROOM4) from Homo sapiens (Human).